Consider the following 311-residue polypeptide: Ornithine carbamoyltransferase (311 aa).

Residues 54–58 (STRTR), asparagine 81, arginine 104, and 131–134 (HPCQ) each bind carbamoyl phosphate. Residues asparagine 164, aspartate 225, and 229–230 (DM) contribute to the L-ornithine site. Residues 268-271 (HDMP), threonine 279, and arginine 297 contribute to the carbamoyl phosphate site.

It belongs to the aspartate/ornithine carbamoyltransferase superfamily. OTCase family.

It is found in the cytoplasm. It catalyses the reaction carbamoyl phosphate + L-ornithine = L-citrulline + phosphate + H(+). It functions in the pathway amino-acid biosynthesis; L-arginine biosynthesis; L-arginine from L-ornithine and carbamoyl phosphate: step 1/3. Reversibly catalyzes the transfer of the carbamoyl group from carbamoyl phosphate (CP) to the N(epsilon) atom of ornithine (ORN) to produce L-citrulline. This chain is Ornithine carbamoyltransferase (argF), found in Leptospira interrogans serogroup Icterohaemorrhagiae serovar copenhageni (strain Fiocruz L1-130).